The chain runs to 404 residues: Subtilisin-like proteinase Mp1 (404 aa).

Residues 1 to 19 (MVGFKTLALHLAAVLPALA) form the signal peptide. Residues 20–112 (APVDKQATQV…VEPDQVWDLY (93 aa)) constitute a propeptide that is removed on maturation. Residues 33–111 (SYIITLKQGA…FVEPDQVWDL (79 aa)) enclose the Inhibitor I9 domain. Residues 121-404 (PWGLGSISHR…NLIAFNGVTA (284 aa)) enclose the Peptidase S8 domain. A glycan (N-linked (GlcNAc...) asparagine) is linked at Asn133. Catalysis depends on charge relay system residues Asp154, His186, and Ser347.

Belongs to the peptidase S8 family.

The protein resides in the secreted. This chain is Subtilisin-like proteinase Mp1, found in Magnaporthiopsis poae (Kentucky bluegrass fungus).